Consider the following 187-residue polypeptide: UPF0301 protein VP2612 (187 aa).

The protein belongs to the UPF0301 (AlgH) family.

The chain is UPF0301 protein VP2612 from Vibrio parahaemolyticus serotype O3:K6 (strain RIMD 2210633).